The sequence spans 178 residues: Glucagon-2 (178 aa).

The first 21 residues, 1-21 (MFGIHSLAGVLLLVIVQSQLA), serve as a signal peptide directing secretion. 3 propeptides span residues 83–87 (SGAPS), 123–134 (ESAEESMNGPMS), and 171–178 (SNKRQEDH).

It belongs to the glucagon family.

The protein localises to the secreted. In terms of biological role, promotes hydrolysis of glycogen and lipids, and raises the blood sugar level. The sequence is that of Glucagon-2 (gcg2) from Oncorhynchus mykiss (Rainbow trout).